Reading from the N-terminus, the 483-residue chain is Glutamyl-tRNA(Gln) amidotransferase subunit A (483 aa).

Catalysis depends on charge relay system residues Lys-76 and Ser-151. Ser-175 functions as the Acyl-ester intermediate in the catalytic mechanism.

Belongs to the amidase family. GatA subfamily. Heterotrimer of A, B and C subunits.

It catalyses the reaction L-glutamyl-tRNA(Gln) + L-glutamine + ATP + H2O = L-glutaminyl-tRNA(Gln) + L-glutamate + ADP + phosphate + H(+). In terms of biological role, allows the formation of correctly charged Gln-tRNA(Gln) through the transamidation of misacylated Glu-tRNA(Gln) in organisms which lack glutaminyl-tRNA synthetase. The reaction takes place in the presence of glutamine and ATP through an activated gamma-phospho-Glu-tRNA(Gln). The chain is Glutamyl-tRNA(Gln) amidotransferase subunit A from Pseudomonas putida (strain ATCC 47054 / DSM 6125 / CFBP 8728 / NCIMB 11950 / KT2440).